Here is a 31-residue protein sequence, read N- to C-terminus: Photosystem II reaction center protein T (31 aa).

A helical membrane pass occupies residues 3–23 (ALVYTFLLVTTLGILFFSIIF).

Belongs to the PsbT family. As to quaternary structure, PSII is composed of 1 copy each of membrane proteins PsbA, PsbB, PsbC, PsbD, PsbE, PsbF, PsbH, PsbI, PsbJ, PsbK, PsbL, PsbM, PsbT, PsbX, PsbY, PsbZ, Psb30/Ycf12, at least 3 peripheral proteins of the oxygen-evolving complex and a large number of cofactors. It forms dimeric complexes.

The protein resides in the plastid. It localises to the cyanelle thylakoid membrane. Functionally, found at the monomer-monomer interface of the photosystem II (PS II) dimer, plays a role in assembly and dimerization of PSII. PSII is a light-driven water plastoquinone oxidoreductase, using light energy to abstract electrons from H(2)O, generating a proton gradient subsequently used for ATP formation. The sequence is that of Photosystem II reaction center protein T from Cyanophora paradoxa.